Here is a 258-residue protein sequence, read N- to C-terminus: Ribosomal RNA small subunit methyltransferase A (258 aa).

The S-adenosyl-L-methionine site is built by His9, Leu11, Gly36, Glu57, Asp83, and Asn102.

It belongs to the class I-like SAM-binding methyltransferase superfamily. rRNA adenine N(6)-methyltransferase family. RsmA subfamily.

It is found in the cytoplasm. The catalysed reaction is adenosine(1518)/adenosine(1519) in 16S rRNA + 4 S-adenosyl-L-methionine = N(6)-dimethyladenosine(1518)/N(6)-dimethyladenosine(1519) in 16S rRNA + 4 S-adenosyl-L-homocysteine + 4 H(+). Its function is as follows. Specifically dimethylates two adjacent adenosines (A1518 and A1519) in the loop of a conserved hairpin near the 3'-end of 16S rRNA in the 30S particle. May play a critical role in biogenesis of 30S subunits. The polypeptide is Ribosomal RNA small subunit methyltransferase A (Caulobacter vibrioides (strain ATCC 19089 / CIP 103742 / CB 15) (Caulobacter crescentus)).